Consider the following 275-residue polypeptide: MEMO1 family protein Nmar_0215 (275 aa).

It belongs to the MEMO1 family.

In Nitrosopumilus maritimus (strain SCM1), this protein is MEMO1 family protein Nmar_0215.